A 622-amino-acid polypeptide reads, in one-letter code: Apical membrane antigen 1 (622 aa).

Residues 1-24 form the signal peptide; the sequence is MRKLYCVLLLSAFEFTYMINFGRG. Residues 25–546 are Extracellular-facing; it reads QNYWEHPYQN…EHKPTYDNMK (522 aa). Disulfide bonds link Cys-149–Cys-302, Cys-217–Cys-247, Cys-263–Cys-275, Cys-320–Cys-418, and Cys-337–Cys-409. The N-linked (GlcNAc...) asparagine glycan is linked to Asn-162. 5 N-linked (GlcNAc...) asparagine glycosylation sites follow: Asn-286, Asn-371, Asn-421, Asn-422, and Asn-499. Cystine bridges form between Cys-443/Cys-502, Cys-490/Cys-507, and Cys-492/Cys-509. Residues 547–567 traverse the membrane as a helical segment; sequence IIIASSAAVAVLATILMVYLY. At 568 to 622 the chain is on the cytoplasmic side; it reads KRKGNAEKYDKMDQPQDYGKSTSRNDEMLDPEASFWGEEKRASHTTPVLMEKPYY. The tract at residues 577-607 is disordered; the sequence is DKMDQPQDYGKSTSRNDEMLDPEASFWGEEK.

Belongs to the apicomplexan parasites AMA1 family.

The protein resides in the membrane. In terms of biological role, involved in parasite invasion of erythrocytes. The polypeptide is Apical membrane antigen 1 (AMA-1) (Plasmodium falciparum (isolate Camp / Malaysia)).